We begin with the raw amino-acid sequence, 116 residues long: Ribosome-binding factor A (116 aa).

Belongs to the RbfA family. In terms of assembly, monomer. Binds 30S ribosomal subunits, but not 50S ribosomal subunits or 70S ribosomes.

Its subcellular location is the cytoplasm. One of several proteins that assist in the late maturation steps of the functional core of the 30S ribosomal subunit. Associates with free 30S ribosomal subunits (but not with 30S subunits that are part of 70S ribosomes or polysomes). Required for efficient processing of 16S rRNA. May interact with the 5'-terminal helix region of 16S rRNA. The protein is Ribosome-binding factor A of Halalkalibacterium halodurans (strain ATCC BAA-125 / DSM 18197 / FERM 7344 / JCM 9153 / C-125) (Bacillus halodurans).